The primary structure comprises 689 residues: MNFENLLIEVGTEELPPKSLRKLAESFLSNFTDELKKAELSFESAVWHAAPRRLAICVNQLALAQADKVVEKRGPAIAQAFDTDGNPTKAAMGWARGNGITVEQAGRLKTDKGEWLLHQAKVVGVETKSLIAAMAQRSLDKLPIPKPMRWGNNTTQFIRPVHTVTMLLGSEVVEGELLGQKSARIIRGHRFMGKASFELVHADNYLSALKEQGKVEANYEVRKALIKAGAEAAAAKIGGVADLEDDLLEEVTSLVEWPVVLTANFEEKFLDVPAEALVYTMKGDQKYFPVFDKAGQLMPNFIFVTNIESKDPQQIIAGNERVVRPRLADAEFFFETDKKDSLESRLTSLETVIFQKQLGTIKDRVARISDMAGFIANSIDANADEAARAGLLSKSDLMTNMVMEFTDLQGTMGMHYARLNGETEAVALALQEQYKPKFSGDTVPTAPVSVCVALAEKLDTLVGIFGIGQAPKGAADPFALRRAAIGILRICVENNLPLNLIDLIAKAQELHGSNLTNDKAAEQVLEFFMGRFRAWYQDQGVSVDVILAVLARRPTSPADFDSRIKAVSHFRSLEQASALAAANKRVSNILAKVEGELPAAIDAGLLVENAEKVLAEKLNELQPQLAPLFAAANYQEALALLADLRESVDTFFEDVMVMADDEALKNNRLALLSSLREQFLHAADISLLQ.

It belongs to the class-II aminoacyl-tRNA synthetase family. Tetramer of two alpha and two beta subunits.

Its subcellular location is the cytoplasm. It catalyses the reaction tRNA(Gly) + glycine + ATP = glycyl-tRNA(Gly) + AMP + diphosphate. This Shewanella sediminis (strain HAW-EB3) protein is Glycine--tRNA ligase beta subunit.